The primary structure comprises 904 residues: NADH-quinone oxidoreductase subunit G (904 aa).

Residues 1 to 83 (MATIHVDGKA…GTWISIDDEE (83 aa)) form the 2Fe-2S ferredoxin-type domain. Positions 34, 45, 48, and 67 each coordinate [2Fe-2S] cluster. A 4Fe-4S His(Cys)3-ligated-type domain is found at 83–122 (ESKAFRASVVEWLMTNHPHDCPVCEEGGHCHLQDMTVMTG). Positions 99, 103, 106, 112, 151, 154, 157, 201, 228, 231, 235, and 263 each coordinate [4Fe-4S] cluster. Residues 221–277 (MQFAPSICHGCSSGCNISPGERYGELRRIENRFNGSVNQYFLCDRGRFGYGYVNRKD) form the 4Fe-4S Mo/W bis-MGD-type domain.

It belongs to the complex I 75 kDa subunit family. In terms of assembly, composed of 13 different subunits. Subunits NuoCD, E, F, and G constitute the peripheral sector of the complex. It depends on [2Fe-2S] cluster as a cofactor. The cofactor is [4Fe-4S] cluster.

It catalyses the reaction a quinone + NADH + 5 H(+)(in) = a quinol + NAD(+) + 4 H(+)(out). Its function is as follows. NDH-1 shuttles electrons from NADH, via FMN and iron-sulfur (Fe-S) centers, to quinones in the respiratory chain. The immediate electron acceptor for the enzyme in this species is believed to be ubiquinone. Couples the redox reaction to proton translocation (for every two electrons transferred, four hydrogen ions are translocated across the cytoplasmic membrane), and thus conserves the redox energy in a proton gradient. The sequence is that of NADH-quinone oxidoreductase subunit G (nuoG) from Pseudomonas putida (strain ATCC 47054 / DSM 6125 / CFBP 8728 / NCIMB 11950 / KT2440).